A 233-amino-acid chain; its full sequence is Small ribosomal subunit protein uS3 (233 aa).

The 69-residue stretch at 39 to 107 folds into the KH type-2 domain; it reads VREFLKAKLK…PVHVNIEEVR (69 aa). The interval 209 to 233 is disordered; that stretch reads PGQVSAEPTQPEKKMRKGGRNAAAN.

The protein belongs to the universal ribosomal protein uS3 family. As to quaternary structure, part of the 30S ribosomal subunit. Forms a tight complex with proteins S10 and S14.

Its function is as follows. Binds the lower part of the 30S subunit head. Binds mRNA in the 70S ribosome, positioning it for translation. The sequence is that of Small ribosomal subunit protein uS3 from Laribacter hongkongensis (strain HLHK9).